Reading from the N-terminus, the 1047-residue chain is Suppression of tumorigenicity 18 protein (1047 aa).

Disordered regions lie at residues T41–A92, F168–Y221, and D251–L286. Over residues N52–S65 the composition is skewed to basic residues. The segment covering H171–D181 has biased composition (basic and acidic residues). 2 CCHHC-type zinc fingers span residues P359–I402 and L403–M446. Positions 368, 373, 386, 392, 412, 417, 430, and 436 each coordinate Zn(2+). Disordered stretches follow at residues G523–Y563 and Y672–P710. Residues A550–Y563 are compositionally biased toward polar residues. Positions G677 to P687 are enriched in basic and acidic residues. 4 consecutive CCHHC-type zinc fingers follow at residues R715–L758, M759–M802, E807–N850, and K860–G903. Residues C724, C729, H742, C748, C768, C773, H786, C792, C816, C821, H834, C840, C869, C874, H887, and C893 each contribute to the Zn(2+) site. A coiled-coil region spans residues I920–S992.

The protein belongs to the MYT1 family. In terms of tissue distribution, detected at low levels in heart, liver, kidney, skeletal muscle, pancreas, testis, ovary and prostate. Detected at even lower levels in mammary epithelial cells and breast cancer cells.

The protein resides in the nucleus. In terms of biological role, repressor that binds to DNA sequences containing a bipartite element consisting of a direct repeat of the sequence 5'-AAAGTTT-3' separated by 2-9 nucleotides. Represses basal transcription activity from target promoters. Inhibits colony formation in cultured breast cancer cells. This Homo sapiens (Human) protein is Suppression of tumorigenicity 18 protein (ST18).